The sequence spans 368 residues: Endophilin-A2 (368 aa).

A membrane-binding amphipathic helix region spans residues 1-21 (MSVAGLKKQFYKASQLVSEKV). The BAR domain occupies 18–249 (SEKVGGAEGT…LKRRVREASS (232 aa)). Residues 60–87 (PNPASRAKLTMLNTVSKIRGQVKNPGYP) form a required for dimerization upon membrane association region. A coiled-coil region spans residues 180-250 (DEELRQALEK…KRRVREASSR (71 aa)). An interaction with ARC region spans residues 218–254 (LVDAQLDYHRQAVQILEELADKLKRRVREASSRPKRE). Residues 244-307 (VREASSRPKR…MPSKSMPPLD (64 aa)) are disordered. Positions 245–263 (REASSRPKREFKPRPREPF) are enriched in basic and acidic residues. A phosphoserine mark is found at Ser288 and Ser292. Residues 306 to 365 (LDQPSCKALYDFEPENDGELGFREGDLITLTNQIDENWYEGMLHGQSGFFPLSYVQVLVP) form the SH3 domain. Tyr315 is modified (phosphotyrosine).

It belongs to the endophilin family. Interacts with ARC, SYNJ1 and DNM1. Interacts with PDCD6IP. Interacts with BIN2.

It is found in the cytoplasm. The protein localises to the early endosome membrane. Its subcellular location is the cell projection. It localises to the podosome. Implicated in endocytosis. May recruit other proteins to membranes with high curvature. This chain is Endophilin-A2 (Sh3gl1), found in Mus musculus (Mouse).